We begin with the raw amino-acid sequence, 326 residues long: Delta-aminolevulinic acid dehydratase (326 aa).

Zn(2+) is bound by residues Cys-119, Cys-121, and Cys-129. Lys-198 functions as the Schiff-base intermediate with substrate in the catalytic mechanism. 5-aminolevulinate contacts are provided by Arg-208 and Arg-220. Glu-236 is a Mg(2+) binding site. The Schiff-base intermediate with substrate role is filled by Lys-251. The 5-aminolevulinate site is built by Ser-277 and Tyr-316.

This sequence belongs to the ALAD family. As to quaternary structure, homooctamer. The cofactor is Zn(2+).

The catalysed reaction is 2 5-aminolevulinate = porphobilinogen + 2 H2O + H(+). Its pathway is porphyrin-containing compound metabolism; protoporphyrin-IX biosynthesis; coproporphyrinogen-III from 5-aminolevulinate: step 1/4. Its function is as follows. Catalyzes an early step in the biosynthesis of tetrapyrroles. Binds two molecules of 5-aminolevulinate per subunit, each at a distinct site, and catalyzes their condensation to form porphobilinogen. The sequence is that of Delta-aminolevulinic acid dehydratase (hemB) from Synechococcus elongatus (strain ATCC 33912 / PCC 7942 / FACHB-805) (Anacystis nidulans R2).